A 150-amino-acid chain; its full sequence is 3-dehydroquinate dehydratase (150 aa).

The active-site Proton acceptor is the tyrosine 23. Substrate contacts are provided by asparagine 79, histidine 85, and aspartate 92. The Proton donor role is filled by histidine 105. Residues 106-107 and arginine 116 each bind substrate; that span reads IS.

It belongs to the type-II 3-dehydroquinase family. Homododecamer.

It carries out the reaction 3-dehydroquinate = 3-dehydroshikimate + H2O. Its pathway is metabolic intermediate biosynthesis; chorismate biosynthesis; chorismate from D-erythrose 4-phosphate and phosphoenolpyruvate: step 3/7. In terms of biological role, catalyzes a trans-dehydration via an enolate intermediate. This Marinomonas sp. (strain MWYL1) protein is 3-dehydroquinate dehydratase.